We begin with the raw amino-acid sequence, 207 residues long: CASP-like protein 1D1 (207 aa).

Topologically, residues 1-40 (MATVDGTTAPSSGGKTATVALESGGGRYGGPAPAKCSGAN) are cytoplasmic. The helical transmembrane segment at 41 to 61 (LALRALLFAVSLSALVVLVTA) threads the bilayer. The Extracellular portion of the chain corresponds to 62-89 (KQTVMVPFVIRPPQFILAPVPAKYTHSP). The chain crosses the membrane as a helical span at residues 90 to 110 (ALIYLLAALCATCFYSLITAI). Over 111 to 124 (SSVRLLSSSACSAK) the chain is Cytoplasmic. The chain crosses the membrane as a helical span at residues 125–145 (TLFYLILLDVFYAAVMASATG). Over 146-176 (TAGAVAWVGLKGNSHTRWNKICNVYGKFCRH) the chain is Extracellular. The helical transmembrane segment at 177–197 (IGSSTFLALIAAIVLVLLAFL) threads the bilayer. Residues 198–207 (NAYSLYRRSR) are Cytoplasmic-facing.

It belongs to the Casparian strip membrane proteins (CASP) family. Homodimer and heterodimers.

The protein localises to the cell membrane. This Oryza sativa subsp. japonica (Rice) protein is CASP-like protein 1D1.